The primary structure comprises 241 residues: Uridylate kinase (241 aa).

Residue 15 to 18 participates in ATP binding; sequence KISG. Residues 23–28 are involved in allosteric activation by GTP; the sequence is GDQGFG. Gly57 is a UMP binding site. Residues Gly58 and Arg62 each contribute to the ATP site. Residues Asp77 and 138–145 each bind UMP; that span reads TGNPYFTT. The ATP site is built by Thr165, Tyr171, and Asp174.

It belongs to the UMP kinase family. As to quaternary structure, homohexamer.

The protein localises to the cytoplasm. The enzyme catalyses UMP + ATP = UDP + ADP. The protein operates within pyrimidine metabolism; CTP biosynthesis via de novo pathway; UDP from UMP (UMPK route): step 1/1. Its activity is regulated as follows. Allosterically activated by GTP. Inhibited by UTP. Functionally, catalyzes the reversible phosphorylation of UMP to UDP. The sequence is that of Uridylate kinase from Paracoccus zeaxanthinifaciens.